The sequence spans 1081 residues: Cellulose synthase A catalytic subunit 1 [UDP-forming] (1081 aa).

Position 1 is an N-acetylmethionine (M1). Residues 1-270 (MEASAGLVAG…SRVVPIPSSR (270 aa)) lie on the Cytoplasmic side of the membrane. Positions 39, 42, 58, 61, 66, 69, 81, and 84 each coordinate Zn(2+). An RING-type; degenerate zinc finger spans residues 39-85 (CQICGDDVGLAETGDVFVACNECAFPVCRPCYEYERKDGTQCCPQCK). Residues 118–195 (GANKARHQRH…RQPVPVRIVD (78 aa)) are disordered. Residues 127–139 (HGEEFSSSSRHES) show a composition bias toward basic and acidic residues. Residues 158–168 (PDTQSVRTTSG) show a composition bias toward polar residues. The helical transmembrane segment at 271-291 (LTPYRVVIILRLIILCFFLQY) threads the bilayer. The Extracellular portion of the chain corresponds to 292 to 299 (RTTHPVKN). The chain crosses the membrane as a helical span at residues 300 to 320 (AYPLWLTSVICEIWFAFSWLL). Over 321–856 (DQFPKWYPIN…LLERIAYINT (536 aa)) the chain is Cytoplasmic. UDP-alpha-D-glucose-binding residues include S359, K365, E366, and D395. The active site involves D395. A coiled-coil region spans residues 449-476 (VKERRAMKREYEEFKVRINALVAKAQKI). K536 provides a ligand contact to UDP-alpha-D-glucose. Residues K537 and D561 each contribute to the Mn(2+) site. D780 is an active-site residue. Residues 857 to 877 (IVYPITSIPLIAYCILPAFCL) traverse the membrane as a helical segment. Residues 878–889 (ITDRFIIPEISN) are Extracellular-facing. A helical membrane pass occupies residues 890-910 (YASIWFILLFISIAVTGILEL). Topologically, residues 911–925 (RWSGVSIEDWWRNEQ) are cytoplasmic. A helical transmembrane segment spans residues 926-946 (FWVIGGTSAHLFAVFQGLLKV). The Extracellular segment spans residues 947–976 (LAGIDTNFTVTSKATDEDGDFAELYIFKWT). Residue N953 is glycosylated (N-linked (GlcNAc...) asparagine). The chain crosses the membrane as a helical span at residues 977–997 (ALLIPPTTVLLVNLIGIVAGV). Over 998-1008 (SYAVNSGYQSW) the chain is Cytoplasmic. The helical transmembrane segment at 1009-1029 (GPLFGKLFFALWVIAHLYPFL) threads the bilayer. The Extracellular portion of the chain corresponds to 1030–1038 (KGLLGRQNR). Residues 1039–1059 (TPTIVIVWSVLLASIFSLLWV) form a helical membrane-spanning segment. Over 1060–1081 (RINPFVDANPNANNFNGKGGVF) the chain is Cytoplasmic.

Belongs to the glycosyltransferase 2 family. Plant cellulose synthase subfamily. In terms of assembly, interacts with CESA3 and CESA6. Assembly with CESA3 and CESA6 is required for functional complex in primary cell wall cellulose synthesis. Interacts with STL1 and STL2, but not with GOT1. Binds to CSI1. Interacts with PAT24/TIP1. Zn(2+) is required as a cofactor. Mn(2+) serves as cofactor. S-acylated. As to expression, expressed in germinating seeds, seedlings, roots, stems, shoots leaves and flowers, but not in mature flowers.

It is found in the cell membrane. The enzyme catalyses [(1-&gt;4)-beta-D-glucosyl](n) + UDP-alpha-D-glucose = [(1-&gt;4)-beta-D-glucosyl](n+1) + UDP + H(+). The protein operates within glycan metabolism; plant cellulose biosynthesis. Functionally, catalytic subunit of cellulose synthase terminal complexes ('rosettes'), required for beta-1,4-glucan microfibril crystallization, a major mechanism of the cell wall formation. Involved in the primary cell wall formation. Required during embryogenesis for cell elongation, orientation of cell expansion and complex cell wall formations, such as interdigitated pattern of epidermal pavement cells, stomatal guard cells and trichomes. Plays a role in lateral roots formation, but seems not necessary for the development of tip-growing cells such as root hairs. The presence of each protein CESA1 and CESA6 is critical for cell expansion after germination. This chain is Cellulose synthase A catalytic subunit 1 [UDP-forming], found in Arabidopsis thaliana (Mouse-ear cress).